Here is a 360-residue protein sequence, read N- to C-terminus: tRNA (guanine(37)-N(1))-methyltransferase (360 aa).

S-adenosyl-L-methionine-binding positions include R197, 235-236, and N283; that span reads DL.

The protein belongs to the class I-like SAM-binding methyltransferase superfamily. TRM5/TYW2 family. Monomer.

The protein localises to the mitochondrion matrix. Its subcellular location is the nucleus. It localises to the cytoplasm. The enzyme catalyses guanosine(37) in tRNA + S-adenosyl-L-methionine = N(1)-methylguanosine(37) in tRNA + S-adenosyl-L-homocysteine + H(+). Functionally, specifically methylates the N1 position of guanosine-37 in various cytoplasmic and mitochondrial tRNAs. Methylation is not dependent on the nature of the nucleoside 5' of the target nucleoside. This is the first step in the biosynthesis of wybutosine (yW), a modified base adjacent to the anticodon of tRNAs and required for accurate decoding. The protein is tRNA (guanine(37)-N(1))-methyltransferase of Encephalitozoon cuniculi (strain GB-M1) (Microsporidian parasite).